We begin with the raw amino-acid sequence, 156 residues long: Small ribosomal subunit protein uS7c (156 aa).

It belongs to the universal ribosomal protein uS7 family. Part of the 30S ribosomal subunit.

It is found in the plastid. The protein localises to the chloroplast. Its function is as follows. One of the primary rRNA binding proteins, it binds directly to 16S rRNA where it nucleates assembly of the head domain of the 30S subunit. This is Small ribosomal subunit protein uS7c (rps7) from Ostreococcus tauri.